Here is a 104-residue protein sequence, read N- to C-terminus: N(4)-acetylcytidine amidohydrolase (104 aa).

The 87-residue stretch at 7-93 folds into the ASCH domain; it reads MTFFSRFEAD…EVIQEIYPGI (87 aa). K22 acts as the Proton acceptor in catalysis. T25 functions as the Nucleophile in the catalytic mechanism. The Proton donor role is filled by E75.

The protein belongs to the N(4)-acetylcytidine amidohydrolase family.

The enzyme catalyses N(4)-acetylcytidine + H2O = cytidine + acetate + H(+). It carries out the reaction N(4)-acetyl-2'-deoxycytidine + H2O = 2'-deoxycytidine + acetate + H(+). The catalysed reaction is N(4)-acetylcytosine + H2O = cytosine + acetate + H(+). Catalyzes the hydrolysis of N(4)-acetylcytidine (ac4C). The chain is N(4)-acetylcytidine amidohydrolase from Vibrio vulnificus (strain CMCP6).